The following is a 229-amino-acid chain: Probable U3 small nucleolar RNA-associated protein 11 (229 aa).

Disordered regions lie at residues 1 to 23 (MSSL…ESRK) and 199 to 229 (KKPG…QRKR).

Belongs to the UTP11 family. As to quaternary structure, component of the ribosomal small subunit (SSU) processome.

It localises to the nucleus. The protein localises to the nucleolus. Its function is as follows. Involved in nucleolar processing of pre-18S ribosomal RNA. The protein is Probable U3 small nucleolar RNA-associated protein 11 of Oryza sativa subsp. japonica (Rice).